The chain runs to 181 residues: Adenylyl-sulfate kinase (181 aa).

Position 20-27 (20-27) interacts with ATP; sequence GLSGAGKS. Ser94 (phosphoserine intermediate) is an active-site residue.

Belongs to the APS kinase family.

The enzyme catalyses adenosine 5'-phosphosulfate + ATP = 3'-phosphoadenylyl sulfate + ADP + H(+). It functions in the pathway sulfur metabolism; hydrogen sulfide biosynthesis; sulfite from sulfate: step 2/3. Functionally, catalyzes the synthesis of activated sulfate. This chain is Adenylyl-sulfate kinase, found in Deinococcus deserti (strain DSM 17065 / CIP 109153 / LMG 22923 / VCD115).